Reading from the N-terminus, the 1110-residue chain is Nitric oxide synthase 3 (1110 aa).

Positions 1–74 (MGNFKSVGQE…PPEGPKFPRV (74 aa)) are disordered. The span at 15–27 (CGLGLGLGLGLCG) shows a compositional bias: gly residues. Over residues 31-40 (PASPAPVSAS) the composition is skewed to low complexity. Residues 47-69 (SSPPLPLPAPEHSPPLTRPPEGP) show a composition bias toward pro residues. Zn(2+) is bound by residues cysteine 97 and cysteine 102. The tract at residues 101-489 (RCLGSLVFPR…PDPWKGSGTK (389 aa)) is interaction with NOSIP. Serine 105 provides a ligand contact to (6R)-L-erythro-5,6,7,8-tetrahydrobiopterin. Phosphoserine is present on serine 117. Cysteine 187 lines the heme b pocket. Residues glutamine 250, tryptophan 359, tyrosine 360, and glutamate 364 each contribute to the L-arginine site. Arginine 368 contributes to the (6R)-L-erythro-5,6,7,8-tetrahydrobiopterin binding site. Residue asparagine 369 coordinates L-arginine. (6R)-L-erythro-5,6,7,8-tetrahydrobiopterin-binding residues include alanine 449, tryptophan 450, and phenylalanine 463. Tyrosine 478 provides a ligand contact to heme b. The residue at position 498 (threonine 498) is a Phosphothreonine. FMN is bound by residues serine 529, glutamate 530, threonine 531, arginine 533, serine 575, and threonine 576. Serine 618, serine 636, and serine 641 each carry phosphoserine. FMN-binding residues include serine 657, cysteine 664, glutamate 690, and glutamine 694. Arginine 779 provides a ligand contact to NADP(+). Residue histidine 801 coordinates FAD. Residues 821–848 (EDPPPPAESVAVEQLEKGSPGGPPPGWV) are disordered. A Phosphoserine modification is found at serine 839. FAD is bound by residues arginine 941, tyrosine 943, serine 944, threonine 959, alanine 961, tyrosine 965, valine 978, cysteine 979, and serine 980. NADP(+)-binding residues include threonine 1019, arginine 1052, serine 1081, arginine 1082, and lysine 1088.

This sequence belongs to the NOS family. Homodimer. Interacts with NOSIP and NOSTRIN. Interacts with HSP90AB1. Forms a complex with ASL, ASS1 and SLC7A1; the complex regulates cell-autonomous L-arginine synthesis and citrulline recycling while channeling extracellular L-arginine to nitric oxide synthesis pathway. Requires heme b as cofactor. The cofactor is FAD. FMN serves as cofactor. (6R)-L-erythro-5,6,7,8-tetrahydrobiopterin is required as a cofactor.

Its subcellular location is the membrane. The protein resides in the caveola. It is found in the cytoplasm. The protein localises to the cytoskeleton. It localises to the golgi apparatus. Its subcellular location is the cell membrane. It carries out the reaction 2 L-arginine + 3 NADPH + 4 O2 + H(+) = 2 L-citrulline + 2 nitric oxide + 3 NADP(+) + 4 H2O. Stimulated by calcium/calmodulin. Inhibited by NOSIP and NOSTRIN. In terms of biological role, produces nitric oxide (NO) which is implicated in vascular smooth muscle relaxation through a cGMP-mediated signal transduction pathway. NO mediates vascular endothelial growth factor (VEGF)-induced angiogenesis in coronary vessels and promotes blood clotting through the activation of platelets. The polypeptide is Nitric oxide synthase 3 (NOS3) (Cavia porcellus (Guinea pig)).